We begin with the raw amino-acid sequence, 347 residues long: 3-isopropylmalate dehydrogenase (347 aa).

The substrate site is built by Arg-94, Arg-104, Arg-128, and Asp-219. Mg(2+)-binding residues include Asp-219, Asp-243, and Asp-247. Gly-279–Asp-291 is a binding site for NAD(+).

Belongs to the isocitrate and isopropylmalate dehydrogenases family. LeuB type 2 subfamily. In terms of assembly, homodimer. Mg(2+) is required as a cofactor. Requires Mn(2+) as cofactor.

The protein localises to the cytoplasm. The enzyme catalyses (2R,3S)-3-isopropylmalate + NAD(+) = 4-methyl-2-oxopentanoate + CO2 + NADH. It participates in amino-acid biosynthesis; L-leucine biosynthesis; L-leucine from 3-methyl-2-oxobutanoate: step 3/4. In terms of biological role, catalyzes the oxidation of 3-carboxy-2-hydroxy-4-methylpentanoate (3-isopropylmalate) to 3-carboxy-4-methyl-2-oxopentanoate. The product decarboxylates to 4-methyl-2 oxopentanoate. This is 3-isopropylmalate dehydrogenase from Streptomyces avermitilis (strain ATCC 31267 / DSM 46492 / JCM 5070 / NBRC 14893 / NCIMB 12804 / NRRL 8165 / MA-4680).